Reading from the N-terminus, the 236-residue chain is 2,3,4,5-tetrahydropyridine-2,6-dicarboxylate N-acetyltransferase (236 aa).

Belongs to the transferase hexapeptide repeat family. DapH subfamily.

The catalysed reaction is (S)-2,3,4,5-tetrahydrodipicolinate + acetyl-CoA + H2O = L-2-acetamido-6-oxoheptanedioate + CoA. It functions in the pathway amino-acid biosynthesis; L-lysine biosynthesis via DAP pathway; LL-2,6-diaminopimelate from (S)-tetrahydrodipicolinate (acetylase route): step 1/3. Its function is as follows. Catalyzes the transfer of an acetyl group from acetyl-CoA to tetrahydrodipicolinate. The chain is 2,3,4,5-tetrahydropyridine-2,6-dicarboxylate N-acetyltransferase from Brevibacillus brevis (strain 47 / JCM 6285 / NBRC 100599).